We begin with the raw amino-acid sequence, 670 residues long: Leucine zipper putative tumor suppressor 2 (670 aa).

Disordered regions lie at residues 1–52, 92–131, and 150–323; these read MAIV…GVPG, NEDF…IPVS, and PVLP…PSDE. The required for centrosomal localization stretch occupies residues 1–333; sequence MAIVQTLPVP…ALLHCVLEGK (333 aa). Residues 187–199 show a composition bias toward low complexity; sequence ASSSSSSSSSSAA. The segment covering 213–233 has biased composition (polar residues); the sequence is PSGTLSDSGRNSLSSLPTYST. Composition is skewed to low complexity over residues 242 to 251 and 260 to 310; these read SPGGHLPSHG and PARG…GGDR. Ser249 and Ser296 each carry phosphoserine. Over residues 311–321 the composition is skewed to pro residues; sequence SPPPPPPPPPS. Residues 329–650 adopt a coiled-coil conformation; sequence VLEGKLRDRE…LELEARELAD (322 aa). Positions 448–670 are sufficient for interaction with CTNNB1; it reads SGEISLLKQQ…CLEEITATEI (223 aa). The sufficient for interaction with KATNB1 and for inhibition of katanin-mediated microtubule severing stretch occupies residues 451–670; it reads ISLLKQQLKE…CLEEITATEI (220 aa). Residue Ser571 is modified to Phosphoserine. The short motif at 632-641 is the Nuclear export signal element; sequence LEQELQQLSL.

This sequence belongs to the LZTS2 family. In terms of assembly, interacts with CTNNB1. Interacts with KATNB1. Also interacts with gamma-tubulin and KIF23.

The protein localises to the cytoplasm. The protein resides in the cytoskeleton. It localises to the microtubule organizing center. Its subcellular location is the centrosome. Negative regulator of katanin-mediated microtubule severing and release from the centrosome. Required for central spindle formation and the completion of cytokinesis. May negatively regulate axonal outgrowth by preventing the formation of microtubule bundles that are necessary for transport within the elongating axon. Negative regulator of the Wnt signaling pathway. Represses beta-catenin-mediated transcriptional activation by promoting the nuclear exclusion of beta-catenin. The chain is Leucine zipper putative tumor suppressor 2 (Lzts2) from Rattus norvegicus (Rat).